The following is a 700-amino-acid chain: Elongation factor G (700 aa).

Residues Lys10 to Leu286 form the tr-type G domain. GTP is bound by residues Ala19 to Thr26, Asp83 to His87, and Asn137 to Asp140.

The protein belongs to the TRAFAC class translation factor GTPase superfamily. Classic translation factor GTPase family. EF-G/EF-2 subfamily.

The protein resides in the cytoplasm. In terms of biological role, catalyzes the GTP-dependent ribosomal translocation step during translation elongation. During this step, the ribosome changes from the pre-translocational (PRE) to the post-translocational (POST) state as the newly formed A-site-bound peptidyl-tRNA and P-site-bound deacylated tRNA move to the P and E sites, respectively. Catalyzes the coordinated movement of the two tRNA molecules, the mRNA and conformational changes in the ribosome. This chain is Elongation factor G, found in Nocardia farcinica (strain IFM 10152).